Consider the following 557-residue polypeptide: CTP synthase (557 aa).

An amidoligase domain region spans residues 1-272 (MARSKIVKHI…DSLVLKKLML (272 aa)). Residue serine 18 coordinates CTP. Residue serine 18 participates in UTP binding. Residue 19 to 24 (SLGKGI) participates in ATP binding. Tyrosine 59 lines the L-glutamine pocket. Aspartate 76 contributes to the ATP binding site. Mg(2+) is bound by residues aspartate 76 and glutamate 146. Residues 153–155 (DIE), 193–198 (KTKPTQ), and lysine 229 contribute to the CTP site. UTP-binding positions include 193–198 (KTKPTQ) and lysine 229. A Glutamine amidotransferase type-1 domain is found at 299–543 (EIGVCGKYTK…VAEAKKFRDE (245 aa)). Glycine 363 serves as a coordination point for L-glutamine. Cysteine 390 acts as the Nucleophile; for glutamine hydrolysis in catalysis. Residues 391–394 (LGMQ), glutamate 414, and arginine 471 each bind L-glutamine. Active-site residues include histidine 516 and glutamate 518.

The protein belongs to the CTP synthase family. As to quaternary structure, homotetramer.

The catalysed reaction is UTP + L-glutamine + ATP + H2O = CTP + L-glutamate + ADP + phosphate + 2 H(+). The enzyme catalyses L-glutamine + H2O = L-glutamate + NH4(+). It catalyses the reaction UTP + NH4(+) + ATP = CTP + ADP + phosphate + 2 H(+). It functions in the pathway pyrimidine metabolism; CTP biosynthesis via de novo pathway; CTP from UDP: step 2/2. Its activity is regulated as follows. Allosterically activated by GTP, when glutamine is the substrate; GTP has no effect on the reaction when ammonia is the substrate. The allosteric effector GTP functions by stabilizing the protein conformation that binds the tetrahedral intermediate(s) formed during glutamine hydrolysis. Inhibited by the product CTP, via allosteric rather than competitive inhibition. Its function is as follows. Catalyzes the ATP-dependent amination of UTP to CTP with either L-glutamine or ammonia as the source of nitrogen. Regulates intracellular CTP levels through interactions with the four ribonucleotide triphosphates. The polypeptide is CTP synthase (Chloroherpeton thalassium (strain ATCC 35110 / GB-78)).